A 322-amino-acid polypeptide reads, in one-letter code: o-succinylbenzoate synthase (322 aa).

Residue Lys136 is the Proton donor of the active site. Residues Asp165, Glu194, and Asp219 each contribute to the Mg(2+) site. The active-site Proton acceptor is the Lys243.

This sequence belongs to the mandelate racemase/muconate lactonizing enzyme family. MenC type 1 subfamily. As to quaternary structure, monomer. The cofactor is a divalent metal cation.

It catalyses the reaction (1R,6R)-6-hydroxy-2-succinyl-cyclohexa-2,4-diene-1-carboxylate = 2-succinylbenzoate + H2O. Its pathway is quinol/quinone metabolism; 1,4-dihydroxy-2-naphthoate biosynthesis; 1,4-dihydroxy-2-naphthoate from chorismate: step 4/7. It participates in cofactor biosynthesis; phylloquinone biosynthesis. Functionally, converts 2-succinyl-6-hydroxy-2,4-cyclohexadiene-1-carboxylate (SHCHC) to 2-succinylbenzoate (OSB). Does not show N-succinylamino acid racemase (NSAR) activity with N-succinyl-L-phenylglycine as substrate. This chain is o-succinylbenzoate synthase, found in Thermosynechococcus vestitus (strain NIES-2133 / IAM M-273 / BP-1).